Reading from the N-terminus, the 205-residue chain is Octanoyltransferase (205 aa).

One can recognise a BPL/LPL catalytic domain in the interval 30–205; that stretch reads ERTADEIWLL…QALRARLGYA (176 aa). Substrate is bound by residues 69-76, 136-138, and 149-151; these read RGGQVTYH, SLG, and GLA. Residue cysteine 167 is the Acyl-thioester intermediate of the active site.

This sequence belongs to the LipB family.

Its subcellular location is the cytoplasm. The enzyme catalyses octanoyl-[ACP] + L-lysyl-[protein] = N(6)-octanoyl-L-lysyl-[protein] + holo-[ACP] + H(+). It functions in the pathway protein modification; protein lipoylation via endogenous pathway; protein N(6)-(lipoyl)lysine from octanoyl-[acyl-carrier-protein]: step 1/2. Catalyzes the transfer of endogenously produced octanoic acid from octanoyl-acyl-carrier-protein onto the lipoyl domains of lipoate-dependent enzymes. Lipoyl-ACP can also act as a substrate although octanoyl-ACP is likely to be the physiological substrate. The protein is Octanoyltransferase of Ectopseudomonas mendocina (strain ymp) (Pseudomonas mendocina).